The following is a 139-amino-acid chain: S-protein homolog 14 (139 aa).

An N-terminal signal peptide occupies residues 1–20 (MNRFIIFMFVVVTYFGLNVA). A glycan (N-linked (GlcNAc...) asparagine) is linked at Asn-136.

This sequence belongs to the plant self-incompatibility (S1) protein family.

The protein resides in the secreted. This chain is S-protein homolog 14, found in Arabidopsis thaliana (Mouse-ear cress).